A 119-amino-acid polypeptide reads, in one-letter code: Beta-2-microglobulin (119 aa).

The N-terminal stretch at 1–20 (MASSVVVALLVLLSLSGLEA) is a signal peptide. The Ig-like C1-type domain occupies 25 to 114 (PKIQVYSRHP…VTFSTPKTVK (90 aa)). Residues Cys45 and Cys100 are joined by a disulfide bond.

Belongs to the beta-2-microglobulin family. As to quaternary structure, heterodimer of an alpha chain and a beta chain. Beta-2-microglobulin is the beta-chain of major histocompatibility complex class I molecules.

The protein localises to the secreted. In terms of biological role, component of the class I major histocompatibility complex (MHC). Involved in the presentation of peptide antigens to the immune system. In Callithrix aurita (White-eared marmoset), this protein is Beta-2-microglobulin (B2M).